The following is a 266-amino-acid chain: Glucosamine-6-phosphate deaminase (266 aa).

Asp-67 (proton acceptor; for enolization step) is an active-site residue. Asn-139 acts as the For ring-opening step in catalysis. His-141 serves as the catalytic Proton acceptor; for ring-opening step. Glu-146 acts as the For ring-opening step in catalysis.

This sequence belongs to the glucosamine/galactosamine-6-phosphate isomerase family. NagB subfamily. Homohexamer.

It catalyses the reaction alpha-D-glucosamine 6-phosphate + H2O = beta-D-fructose 6-phosphate + NH4(+). It functions in the pathway amino-sugar metabolism; N-acetylneuraminate degradation; D-fructose 6-phosphate from N-acetylneuraminate: step 5/5. In terms of biological role, catalyzes the reversible isomerization-deamination of glucosamine 6-phosphate (GlcN6P) to form fructose 6-phosphate (Fru6P) and ammonium ion. The chain is Glucosamine-6-phosphate deaminase from Marinomonas sp. (strain MWYL1).